A 299-amino-acid chain; its full sequence is MTIELKNEYLTVQFKTLGGQLTSIKDKDGLEYLWQADPEYWNGQAPILFPICGSLRNDWAIYRPQDRPFFTGLIRRHGFVRKEEFTLEEVNENSVTFSIKPNAEMLDNYLYQFELRVVYTLNGKSIRTEFQVTNLETEKTMPYFIGAHPAFNCPLVEGEKYEDYSLEFSEVESCSIPKSFPETGLLDLQDRTPFLENQKSLDLDYSLFSHDAITLDRLKSRSVTLRSRKSGKGLRVDFDDFPNLILWSTSNKSPFIALEPWSGLSTSLEEGNILEDKPQVTKVLPLDTSKKSYDITILN.

The protein is Protein LacX, chromosomal (lacX) of Lactococcus lactis subsp. lactis (Streptococcus lactis).